Here is a 242-residue protein sequence, read N- to C-terminus: Probable transcriptional regulatory protein EUBREC_1961 (242 aa).

The protein belongs to the TACO1 family.

The protein resides in the cytoplasm. The sequence is that of Probable transcriptional regulatory protein EUBREC_1961 from Agathobacter rectalis (strain ATCC 33656 / DSM 3377 / JCM 17463 / KCTC 5835 / VPI 0990) (Eubacterium rectale).